The primary structure comprises 474 residues: tRNA-2-methylthio-N(6)-dimethylallyladenosine synthase (474 aa).

Residues 3–120 form the MTTase N-terminal domain; it reads KKLHIKTWGC…LPEMINHVQE (118 aa). Residues Cys12, Cys49, Cys83, Cys157, Cys161, and Cys164 each coordinate [4Fe-4S] cluster. Positions 143–375 constitute a Radical SAM core domain; it reads RAEGPTAFVS…QQRISQQAME (233 aa). The TRAM domain maps to 378–441; the sequence is RKMVGTVQRV…ASSLRGILLR (64 aa).

It belongs to the methylthiotransferase family. MiaB subfamily. In terms of assembly, monomer. [4Fe-4S] cluster is required as a cofactor.

Its subcellular location is the cytoplasm. It carries out the reaction N(6)-dimethylallyladenosine(37) in tRNA + (sulfur carrier)-SH + AH2 + 2 S-adenosyl-L-methionine = 2-methylsulfanyl-N(6)-dimethylallyladenosine(37) in tRNA + (sulfur carrier)-H + 5'-deoxyadenosine + L-methionine + A + S-adenosyl-L-homocysteine + 2 H(+). Catalyzes the methylthiolation of N6-(dimethylallyl)adenosine (i(6)A), leading to the formation of 2-methylthio-N6-(dimethylallyl)adenosine (ms(2)i(6)A) at position 37 in tRNAs that read codons beginning with uridine. The polypeptide is tRNA-2-methylthio-N(6)-dimethylallyladenosine synthase (Yersinia pseudotuberculosis serotype O:3 (strain YPIII)).